The sequence spans 155 residues: Interleukin-2 (155 aa).

The first 20 residues, methionine 1 to serine 20, serve as a signal peptide directing secretion. Threonine 23 carries O-linked (GalNAc...) threonine glycosylation. Cysteine 78 and cysteine 126 are joined by a disulfide.

This sequence belongs to the IL-2 family.

The protein localises to the secreted. Its function is as follows. Cytokine produced by activated CD4-positive helper T-cells and to a lesser extend activated CD8-positive T-cells and natural killer (NK) cells that plays pivotal roles in the immune response and tolerance. Binds to a receptor complex composed of either the high-affinity trimeric IL-2R (IL2RA/CD25, IL2RB/CD122 and IL2RG/CD132) or the low-affinity dimeric IL-2R (IL2RB and IL2RG). Interaction with the receptor leads to oligomerization and conformation changes in the IL-2R subunits resulting in downstream signaling starting with phosphorylation of JAK1 and JAK3. In turn, JAK1 and JAK3 phosphorylate the receptor to form a docking site leading to the phosphorylation of several substrates including STAT5. This process leads to activation of several pathways including STAT, phosphoinositide-3-kinase/PI3K and mitogen-activated protein kinase/MAPK pathways. Functions as a T-cell growth factor and can increase NK-cell cytolytic activity as well. Promotes strong proliferation of activated B-cells and subsequently immunoglobulin production. Plays a pivotal role in regulating the adaptive immune system by controlling the survival and proliferation of regulatory T-cells, which are required for the maintenance of immune tolerance. Moreover, participates in the differentiation and homeostasis of effector T-cell subsets, including Th1, Th2, Th17 as well as memory CD8-positive T-cells. The chain is Interleukin-2 (Il2) from Rattus norvegicus (Rat).